A 180-amino-acid polypeptide reads, in one-letter code: MLEGVSNEFDHFGISLPLKICLHLGWDEGLVEGKVVRLGQGIGKSICSSCQLFEEAPTQMSTVPSGLPLPILMHLCLLPVCMAHLCPASPCYFGATPGSGKFCRLITYSHSSPQLAASLRHRGREVGKDLPYPGLCPLTFHPSFFPPVEGCVSSLPGKLLSPQTIFFQILWLYSKSSLVL.

This is an uncharacterized protein from Homo sapiens (Human).